The following is a 256-amino-acid chain: Necrosis-inducing protein NPP1 (256 aa).

Residues 111-121 (AIMYAWYFPKG) carry the Conserved undecapeptide motif motif. The Conserved heptapeptide motif motif lies at 133–139 (GHRHEWE).

It belongs to the Necrosis inducing protein (NPP1) family.

It localises to the secreted. Functionally, secreted effector that acts as a pathogen-associated molecular pattern (PAMP) recognized by the plant immune system. The chain is Necrosis-inducing protein NPP1 from Phytophthora cinnamomi (Cinnamon fungus).